Consider the following 187-residue polypeptide: RNA 2',3'-cyclic phosphodiesterase (187 aa).

Catalysis depends on H40, which acts as the Proton donor. 2 consecutive short sequence motifs (HXTX) follow at residues 40–43 and 125–128; these read HLTL and HITI. H125 (proton acceptor) is an active-site residue.

It belongs to the 2H phosphoesterase superfamily. ThpR family.

The enzyme catalyses a 3'-end 2',3'-cyclophospho-ribonucleotide-RNA + H2O = a 3'-end 2'-phospho-ribonucleotide-RNA + H(+). In terms of biological role, hydrolyzes RNA 2',3'-cyclic phosphodiester to an RNA 2'-phosphomonoester. In Thermotoga maritima (strain ATCC 43589 / DSM 3109 / JCM 10099 / NBRC 100826 / MSB8), this protein is RNA 2',3'-cyclic phosphodiesterase.